The primary structure comprises 164 residues: SsrA-binding protein (164 aa).

The disordered stretch occupies residues 141 to 164 (KLHDKRQDEKQKSIKREINSALKR). Residues 145 to 158 (KRQDEKQKSIKREI) show a composition bias toward basic and acidic residues.

The protein belongs to the SmpB family.

It localises to the cytoplasm. In terms of biological role, required for rescue of stalled ribosomes mediated by trans-translation. Binds to transfer-messenger RNA (tmRNA), required for stable association of tmRNA with ribosomes. tmRNA and SmpB together mimic tRNA shape, replacing the anticodon stem-loop with SmpB. tmRNA is encoded by the ssrA gene; the 2 termini fold to resemble tRNA(Ala) and it encodes a 'tag peptide', a short internal open reading frame. During trans-translation Ala-aminoacylated tmRNA acts like a tRNA, entering the A-site of stalled ribosomes, displacing the stalled mRNA. The ribosome then switches to translate the ORF on the tmRNA; the nascent peptide is terminated with the 'tag peptide' encoded by the tmRNA and targeted for degradation. The ribosome is freed to recommence translation, which seems to be the essential function of trans-translation. The protein is SsrA-binding protein of Prochlorococcus marinus (strain MIT 9215).